A 220-amino-acid polypeptide reads, in one-letter code: Protein-methionine-sulfoxide reductase heme-binding subunit MsrQ (220 aa).

6 consecutive transmembrane segments (helical) span residues 20 to 40, 52 to 72, 86 to 106, 122 to 142, 153 to 173, and 175 to 195; these read LWLLYTAGFVPAVWTFYLGAT, EHLLGLWALRFLILTLLVTPI, ALGLLAFYYALMHFTTYMVLD, PFITIGMISLALLVPLALTSN, WSSLHKLVYIAIAGSAVHFLM, and VKSWPAEPVIYAAIVAALLLW.

Belongs to the MsrQ family. In terms of assembly, heterodimer of a catalytic subunit (MsrP) and a heme-binding subunit (MsrQ). Requires FMN as cofactor. It depends on heme b as a cofactor.

The protein resides in the cell inner membrane. Its function is as follows. Part of the MsrPQ system that repairs oxidized periplasmic proteins containing methionine sulfoxide residues (Met-O), using respiratory chain electrons. Thus protects these proteins from oxidative-stress damage caused by reactive species of oxygen and chlorine generated by the host defense mechanisms. MsrPQ is essential for the maintenance of envelope integrity under bleach stress, rescuing a wide series of structurally unrelated periplasmic proteins from methionine oxidation. MsrQ provides electrons for reduction to the reductase catalytic subunit MsrP, using the quinone pool of the respiratory chain. The sequence is that of Protein-methionine-sulfoxide reductase heme-binding subunit MsrQ from Brucella abortus (strain S19).